A 108-amino-acid chain; its full sequence is UPF0060 membrane protein YnfA (108 aa).

Residues 1–5 (MLKTT) are Periplasmic-facing. The chain crosses the membrane as a helical span at residues 6–26 (LLFFVTALCEIIGCFLPWLWL). At 27–30 (KRGA) the chain is on the cytoplasmic side. A helical transmembrane segment spans residues 31-51 (SVWWLLPAAASLALFVWLLTL). Topologically, residues 52–60 (HPAASGRVY) are periplasmic. Residues 61–81 (AAYGGVYVCTALLWLRVVDGV) traverse the membrane as a helical segment. Residues 82 to 84 (RLT) lie on the Cytoplasmic side of the membrane. A helical membrane pass occupies residues 85-105 (VYDWCGALIALCGMLIIVVGW). The Periplasmic segment spans residues 106 to 108 (GRT).

Belongs to the UPF0060 family.

Its subcellular location is the cell inner membrane. The protein is UPF0060 membrane protein YnfA of Salmonella agona (strain SL483).